Here is a 98-residue protein sequence, read N- to C-terminus: NADH-ubiquinone oxidoreductase chain 4L (98 aa).

Helical transmembrane passes span 1 to 21 (MSLT…GLLM), 29 to 49 (SLLC…MVIL), and 61 to 81 (IILL…LVMV).

The protein belongs to the complex I subunit 4L family. As to quaternary structure, core subunit of respiratory chain NADH dehydrogenase (Complex I) which is composed of 45 different subunits.

It is found in the mitochondrion inner membrane. It catalyses the reaction a ubiquinone + NADH + 5 H(+)(in) = a ubiquinol + NAD(+) + 4 H(+)(out). Core subunit of the mitochondrial membrane respiratory chain NADH dehydrogenase (Complex I) which catalyzes electron transfer from NADH through the respiratory chain, using ubiquinone as an electron acceptor. Part of the enzyme membrane arm which is embedded in the lipid bilayer and involved in proton translocation. In Vampyressa thyone (Northern little yellow-eared bat), this protein is NADH-ubiquinone oxidoreductase chain 4L (MT-ND4L).